The following is a 266-amino-acid chain: Killer cell lectin-like receptor 3 (266 aa).

The Cytoplasmic segment spans residues 1–48 (MSEPEVTYSTVRLHKSSGLQKLVRHEETQGPREVGNRKCSAPWQLIVK). Residues 49-69 (ALGILCFLLLVTVAVLAVKIF) traverse the membrane as a helical; Signal-anchor for type II membrane protein segment. At 70–266 (QYNQHKQEIN…CGKKLDKFPD (197 aa)) the chain is on the extracellular side. N-linked (GlcNAc...) asparagine glycosylation is found at N79, N87, N104, and N113. An involved in dimerization region spans residues 147–151 (WFCYS). A disulfide bond links C149 and C154. Residues 150–258 (YSTKCYYFIM…CNIPYYCICG (109 aa)) form the C-type lectin domain. Residue N160 is glycosylated (N-linked (GlcNAc...) asparagine). Implicated in MHC class I binding stretches follow at residues 160–162 (NKT), 195–196 (IP), 207–208 (KK), 224–233 (MKIRKMNFKS), and 240–245 (SKARIE). Disulfide bonds link C167–C255, C171–C257, and C236–C249.

In terms of assembly, homodimer; disulfide-linked.

It is found in the membrane. Its function is as follows. Receptor on natural killer (NK) cells for class I MHC. This chain is Killer cell lectin-like receptor 3 (Klra3), found in Mus musculus (Mouse).